The sequence spans 342 residues: GTPase Obg (342 aa).

In terms of domain architecture, Obg spans 1 to 159 (MKFLDLCKVY…RTIWLRLKLI (159 aa)). Residues 160–327 (ADAGLLGLPN…VLRALWAEID (168 aa)) enclose the OBG-type G domain. Residues 166 to 173 (GLPNAGKS), 191 to 195 (FTTLV), 212 to 215 (DIPG), 279 to 282 (NKID), and 308 to 310 (SGV) each bind GTP. The Mg(2+) site is built by Ser-173 and Thr-193.

The protein belongs to the TRAFAC class OBG-HflX-like GTPase superfamily. OBG GTPase family. As to quaternary structure, monomer. Mg(2+) is required as a cofactor.

The protein localises to the cytoplasm. In terms of biological role, an essential GTPase which binds GTP, GDP and possibly (p)ppGpp with moderate affinity, with high nucleotide exchange rates and a fairly low GTP hydrolysis rate. Plays a role in control of the cell cycle, stress response, ribosome biogenesis and in those bacteria that undergo differentiation, in morphogenesis control. This is GTPase Obg from Cereibacter sphaeroides (strain KD131 / KCTC 12085) (Rhodobacter sphaeroides).